The following is a 129-amino-acid chain: Small ribosomal subunit protein uS11 (129 aa).

Belongs to the universal ribosomal protein uS11 family. In terms of assembly, part of the 30S ribosomal subunit. Interacts with proteins S7 and S18. Binds to IF-3.

Its function is as follows. Located on the platform of the 30S subunit, it bridges several disparate RNA helices of the 16S rRNA. Forms part of the Shine-Dalgarno cleft in the 70S ribosome. This is Small ribosomal subunit protein uS11 from Halalkalibacterium halodurans (strain ATCC BAA-125 / DSM 18197 / FERM 7344 / JCM 9153 / C-125) (Bacillus halodurans).